A 375-amino-acid polypeptide reads, in one-letter code: Phospho-N-acetylmuramoyl-pentapeptide-transferase (375 aa).

The next 10 helical transmembrane spans lie at 2–22 (IGLL…TPLF), 55–75 (AVII…LAVL), 82–102 (PTAS…VGFV), 120–140 (GKII…LNFP), 158–178 (IPWL…FVIW), 198–218 (GLAT…SLFQ), 237–257 (PMDL…FLWW), 264–284 (IFMG…FAIF), 289–309 (ILVA…IIQV), and 345–365 (WLLS…DWLI).

Belongs to the glycosyltransferase 4 family. MraY subfamily. Mg(2+) serves as cofactor.

The protein localises to the cell membrane. It carries out the reaction UDP-N-acetyl-alpha-D-muramoyl-L-alanyl-gamma-D-glutamyl-meso-2,6-diaminopimeloyl-D-alanyl-D-alanine + di-trans,octa-cis-undecaprenyl phosphate = di-trans,octa-cis-undecaprenyl diphospho-N-acetyl-alpha-D-muramoyl-L-alanyl-D-glutamyl-meso-2,6-diaminopimeloyl-D-alanyl-D-alanine + UMP. The protein operates within cell wall biogenesis; peptidoglycan biosynthesis. Functionally, catalyzes the initial step of the lipid cycle reactions in the biosynthesis of the cell wall peptidoglycan: transfers peptidoglycan precursor phospho-MurNAc-pentapeptide from UDP-MurNAc-pentapeptide onto the lipid carrier undecaprenyl phosphate, yielding undecaprenyl-pyrophosphoryl-MurNAc-pentapeptide, known as lipid I. This Micrococcus luteus (strain ATCC 4698 / DSM 20030 / JCM 1464 / CCM 169 / CCUG 5858 / IAM 1056 / NBRC 3333 / NCIMB 9278 / NCTC 2665 / VKM Ac-2230) (Micrococcus lysodeikticus) protein is Phospho-N-acetylmuramoyl-pentapeptide-transferase.